Here is a 365-residue protein sequence, read N- to C-terminus: Popy Class I histocompatibility antigen, A-1 alpha chain (365 aa).

Positions 1–24 (MAIMAPRTLLLLLSGALALTQTWA) are cleaved as a signal peptide. The segment at 25–114 (GSHSMRYFST…LRGYYNQSDG (90 aa)) is alpha-1. Topologically, residues 25–308 (GSHSMRYFST…ELSSQPTIPI (284 aa)) are extracellular. Residue asparagine 110 is glycosylated (N-linked (GlcNAc...) asparagine). Residues 115-206 (GSHTIQRMFG…ENGKETLQRT (92 aa)) form an alpha-2 region. Intrachain disulfides connect cysteine 125-cysteine 188 and cysteine 227-cysteine 283. Residues 207 to 298 (DAPKTHMTHH…GLPEPLTLRW (92 aa)) are alpha-3. Residues 209-297 (PKTHMTHHPV…EGLPEPLTLR (89 aa)) enclose the Ig-like C1-type domain. The interval 299 to 308 (ELSSQPTIPI) is connecting peptide. Residues 309 to 332 (VGIIAGLVLLGAVITGAVVAAVMW) traverse the membrane as a helical segment. Residues 333–365 (RRRNSDRKGGSYSQAASNDSAQGSDVSLTACKV) lie on the Cytoplasmic side of the membrane. The segment at 340 to 365 (KGGSYSQAASNDSAQGSDVSLTACKV) is disordered. Serine 343 is subject to Phosphoserine. Polar residues predominate over residues 343–359 (SYSQAASNDSAQGSDVS). Tyrosine 344 bears the Phosphotyrosine mark. A phosphoserine mark is found at serine 345, serine 349, serine 352, serine 356, and serine 359.

This sequence belongs to the MHC class I family. As to quaternary structure, heterodimer of an alpha chain and a beta chain (beta-2-microglobulin).

It localises to the membrane. In terms of biological role, involved in the presentation of foreign antigens to the immune system. The sequence is that of Popy Class I histocompatibility antigen, A-1 alpha chain from Pongo pygmaeus (Bornean orangutan).